The primary structure comprises 316 residues: Transaldolase (316 aa).

Catalysis depends on lysine 132, which acts as the Schiff-base intermediate with substrate.

It belongs to the transaldolase family. Type 1 subfamily.

The protein localises to the cytoplasm. It carries out the reaction D-sedoheptulose 7-phosphate + D-glyceraldehyde 3-phosphate = D-erythrose 4-phosphate + beta-D-fructose 6-phosphate. The protein operates within carbohydrate degradation; pentose phosphate pathway; D-glyceraldehyde 3-phosphate and beta-D-fructose 6-phosphate from D-ribose 5-phosphate and D-xylulose 5-phosphate (non-oxidative stage): step 2/3. Transaldolase is important for the balance of metabolites in the pentose-phosphate pathway. This Vibrio cholerae serotype O1 (strain ATCC 39315 / El Tor Inaba N16961) protein is Transaldolase.